A 583-amino-acid polypeptide reads, in one-letter code: Aspartate--tRNA ligase (583 aa).

Glutamate 174 provides a ligand contact to L-aspartate. The tract at residues 198 to 201 (QITK) is aspartate. Arginine 220 lines the L-aspartate pocket. ATP is bound by residues 220–222 (RDE) and glutamine 229. Histidine 443 provides a ligand contact to L-aspartate. An ATP-binding site is contributed by glutamate 477. Residue arginine 484 coordinates L-aspartate. 529–532 (GLDR) serves as a coordination point for ATP.

The protein belongs to the class-II aminoacyl-tRNA synthetase family. Type 1 subfamily. As to quaternary structure, homodimer.

It localises to the cytoplasm. The enzyme catalyses tRNA(Asp) + L-aspartate + ATP = L-aspartyl-tRNA(Asp) + AMP + diphosphate. Functionally, catalyzes the attachment of L-aspartate to tRNA(Asp) in a two-step reaction: L-aspartate is first activated by ATP to form Asp-AMP and then transferred to the acceptor end of tRNA(Asp). This Streptococcus suis (strain 98HAH33) protein is Aspartate--tRNA ligase.